A 1077-amino-acid polypeptide reads, in one-letter code: Adenylate cyclase type 4 (1077 aa).

At 1-28 (MARLFSPRPPPSEDLFYETYYSLSQQYP) the chain is on the cytoplasmic side. Transmembrane regions (helical) follow at residues 29-50 (LLIL…VAWA), 61-80 (FLTT…GLAS), 94-117 (GLIW…VSAW), 120-138 (VSFF…PLGM), 141-162 (AAAA…YLGW), and 170-190 (LLPQ…VGAY). Residues 191-582 (HKALMERALR…YRLSALPAFK (392 aa)) are Cytoplasmic-facing. Mg(2+) contacts are provided by D278, I279, and D322. Residues 278–283 (DIVGFT), 320–322 (LGD), and R366 contribute to the ATP site. The interval 503–524 (TSTPLPEKAFSPQWSLDRSRTP) is disordered. S517 carries the phosphoserine modification. Phosphothreonine is present on T533. 3 helical membrane-spanning segments follow: residues 583–604 (YYAA…LVTT), 608–630 (ALII…CFSE), and 661–684 (VALG…FLPV). Residues 685-717 (SSDCLFLASNVSSVTFNASWEMPGSLPLISIPL) lie on the Extracellular side of the membrane. 2 N-linked (GlcNAc...) asparagine glycosylation sites follow: N694 and N701. 3 consecutive transmembrane segments (helical) span residues 718–738 (ISIP…SLFL), 746–766 (LLLL…SHAW), and 793–809 (MGAI…LVLA). At 810-1077 (RQNEYYCRLD…LTRTGSPSAS (268 aa)) the chain is on the cytoplasmic side. ATP-binding positions include K927, 1007-1009 (DIW), 1014-1018 (NVASR), and K1054.

It belongs to the adenylyl cyclase class-4/guanylyl cyclase family. It depends on Mg(2+) as a cofactor. The cofactor is Mn(2+).

The protein resides in the cell membrane. It is found in the cytoplasm. It carries out the reaction ATP = 3',5'-cyclic AMP + diphosphate. With respect to regulation, activated by forskolin. Insensitive to calcium/calmodulin. Stimulated by GNAS and by the G-protein beta and gamma subunit complex. Functionally, catalyzes the formation of the signaling molecule cAMP in response to G-protein signaling. In Mus musculus (Mouse), this protein is Adenylate cyclase type 4 (Adcy4).